A 187-amino-acid chain; its full sequence is Ras-like protein rasD (187 aa).

10 to 17 (GGGGVGKS) serves as a coordination point for GTP. The short motif at 32 to 40 (YDPTIEDSY) is the Effector region element. Residues 57 to 61 (DTAGQ) and 116 to 119 (NKAD) contribute to the GTP site. C184 carries the cysteine methyl ester modification. C184 carries S-geranylgeranyl cysteine lipidation. Residues 185–187 (LIL) constitute a propeptide, removed in mature form.

Belongs to the small GTPase superfamily. Ras family.

It localises to the cell membrane. The enzyme catalyses GTP + H2O = GDP + phosphate + H(+). Alternates between an inactive form bound to GDP and an active form bound to GTP. Activated by a guanine nucleotide-exchange factor (GEF) and inactivated by a GTPase-activating protein (GAP). Ras proteins bind GDP/GTP and possess intrinsic GTPase activity. The sequence is that of Ras-like protein rasD (rasD) from Dictyostelium discoideum (Social amoeba).